A 260-amino-acid chain; its full sequence is Hydroxyethylthiazole kinase 1 (260 aa).

M39 provides a ligand contact to substrate. ATP-binding residues include R115 and T160. G187 provides a ligand contact to substrate.

The protein belongs to the Thz kinase family. Requires Mg(2+) as cofactor.

It catalyses the reaction 5-(2-hydroxyethyl)-4-methylthiazole + ATP = 4-methyl-5-(2-phosphooxyethyl)-thiazole + ADP + H(+). The protein operates within cofactor biosynthesis; thiamine diphosphate biosynthesis; 4-methyl-5-(2-phosphoethyl)-thiazole from 5-(2-hydroxyethyl)-4-methylthiazole: step 1/1. Functionally, catalyzes the phosphorylation of the hydroxyl group of 4-methyl-5-beta-hydroxyethylthiazole (THZ). The protein is Hydroxyethylthiazole kinase 1 of Streptococcus pneumoniae (strain 70585).